A 439-amino-acid polypeptide reads, in one-letter code: Chitinase-like protein Idgf1 (439 aa).

A signal peptide spans 1-20 (MRFQLFYILGLLSVTSLTQA). The GH18 domain maps to 22 to 439 (NNLVCYYDST…IVRSIKYFMG (418 aa)). C26 and C53 are oxidised to a cystine. N-linked (GlcNAc...) asparagine glycosylation is found at N122, N218, and N346. A disulfide bond links C340 and C423.

Belongs to the glycosyl hydrolase 18 family. IDGF subfamily. Post-translationally, glycosylated.

It is found in the secreted. Its function is as follows. Cooperates with insulin-like peptides to stimulate the proliferation, polarization and motility of imaginal disk cells. May act by stabilizing the binding of insulin-like peptides to its receptor through a simultaneous interaction with both molecules to form a multiprotein signaling complex. The chain is Chitinase-like protein Idgf1 (Idgf1) from Drosophila simulans (Fruit fly).